The sequence spans 234 residues: Large ribosomal subunit protein uL1 (234 aa).

Belongs to the universal ribosomal protein uL1 family. In terms of assembly, part of the 50S ribosomal subunit.

Functionally, binds directly to 23S rRNA. The L1 stalk is quite mobile in the ribosome, and is involved in E site tRNA release. Its function is as follows. Protein L1 is also a translational repressor protein, it controls the translation of the L11 operon by binding to its mRNA. This Corynebacterium aurimucosum (strain ATCC 700975 / DSM 44827 / CIP 107346 / CN-1) (Corynebacterium nigricans) protein is Large ribosomal subunit protein uL1.